The following is a 295-amino-acid chain: 4-hydroxy-tetrahydrodipicolinate synthase (295 aa).

Threonine 47 contacts pyruvate. Catalysis depends on tyrosine 135, which acts as the Proton donor/acceptor. Lysine 163 acts as the Schiff-base intermediate with substrate in catalysis. Residue isoleucine 206 coordinates pyruvate.

Belongs to the DapA family. In terms of assembly, homodimer.

The protein resides in the cytoplasm. The enzyme catalyses L-aspartate 4-semialdehyde + pyruvate = (2S,4S)-4-hydroxy-2,3,4,5-tetrahydrodipicolinate + H2O + H(+). It functions in the pathway amino-acid biosynthesis; L-lysine biosynthesis via DAP pathway; (S)-tetrahydrodipicolinate from L-aspartate: step 3/4. Its function is as follows. Catalyzes the condensation of (S)-aspartate-beta-semialdehyde [(S)-ASA] and pyruvate to 4-hydroxy-tetrahydrodipicolinate (HTPA). The chain is 4-hydroxy-tetrahydrodipicolinate synthase from Staphylococcus aureus (strain bovine RF122 / ET3-1).